A 591-amino-acid polypeptide reads, in one-letter code: Aspartate--tRNA(Asp/Asn) ligase (591 aa).

Glu174 serves as a coordination point for L-aspartate. The interval 198–201 (QLFK) is aspartate. Arg220 contacts L-aspartate. ATP is bound by residues 220 to 222 (RDE) and Gln229. Position 450 (His450) interacts with L-aspartate. Glu483 provides a ligand contact to ATP. Arg490 contacts L-aspartate. Residue 535-538 (GLDR) coordinates ATP.

It belongs to the class-II aminoacyl-tRNA synthetase family. Type 1 subfamily. As to quaternary structure, homodimer.

The protein localises to the cytoplasm. It catalyses the reaction tRNA(Asx) + L-aspartate + ATP = L-aspartyl-tRNA(Asx) + AMP + diphosphate. Its function is as follows. Aspartyl-tRNA synthetase with relaxed tRNA specificity since it is able to aspartylate not only its cognate tRNA(Asp) but also tRNA(Asn). Reaction proceeds in two steps: L-aspartate is first activated by ATP to form Asp-AMP and then transferred to the acceptor end of tRNA(Asp/Asn). This Pseudomonas savastanoi pv. phaseolicola (strain 1448A / Race 6) (Pseudomonas syringae pv. phaseolicola (strain 1448A / Race 6)) protein is Aspartate--tRNA(Asp/Asn) ligase.